The chain runs to 293 residues: N(1)-aminopropylagmatine ureohydrolase (293 aa).

Mn(2+)-binding residues include His-105, Asp-128, His-130, Asp-132, Asp-210, and Asp-212.

It belongs to the arginase family. Mn(2+) serves as cofactor.

It is found in the cytoplasm. The enzyme catalyses N(1)-(3-aminopropyl)agmatine + H2O = urea + spermidine. It participates in amine and polyamine biosynthesis; spermidine biosynthesis. Functionally, involved in the biosynthesis of polyamines which are thought to support the growth of thermophilic microorganisms under high-temperature conditions. It seems that long-chain and branched-chain of polyamines effectively stabilize DNA and RNA, respectively. Catalyzes the decarboxylation of N1-(3-aminopropyl)agmatine to yield spermidine and urea. It cannot use agmatine as substrate. The protein is N(1)-aminopropylagmatine ureohydrolase of Thermus thermophilus (strain ATCC 27634 / DSM 579 / HB8).